A 1058-amino-acid polypeptide reads, in one-letter code: Ubiquitin-like modifier-activating enzyme 1 (1058 aa).

Positions 1–46 (MSSSPLSKKRRVSGPDPKPGSNCSPAQSALSEVSSVPTNGMAKNGS) are disordered. Ser2 bears the N-acetylserine mark. Ser4, Ser13, Ser21, Ser24, and Ser46 each carry phosphoserine. The segment covering 21–38 (SNCSPAQSALSEVSSVPT) has biased composition (polar residues). Tyr55 is modified (phosphotyrosine). Tandem repeats lie at residues 63 to 199 (GHEA…GQLF) and 459 to 611 (GSDF…QVVI). The segment at 63-611 (GHEAMKMLQT…GTKGNVQVVI (549 aa)) is 2 approximate repeats. ATP-binding positions include Ala478, Asp504, Arg515, Lys528, and 576-577 (DN). N6-succinyllysine is present on Lys528. The active-site Glycyl thioester intermediate is Cys632. N6-acetyllysine is present on Lys671. At Thr800 the chain carries Phosphothreonine. Phosphoserine occurs at positions 810, 816, 820, and 835. Lys980 carries the post-translational modification N6-acetyllysine.

This sequence belongs to the ubiquitin-activating E1 family. As to quaternary structure, monomer. Interacts with GAN (via BTB domain). ISGylated. In terms of tissue distribution, ubiquitously expressed. In testis, expressed in A spermatogonia and spermatids but at very low levels in pachytene spermatocytes.

Its subcellular location is the cytoplasm. The protein resides in the mitochondrion. The protein localises to the nucleus. The enzyme catalyses ATP + ubiquitin + [E1 ubiquitin-activating enzyme]-L-cysteine = AMP + diphosphate + S-ubiquitinyl-[E1 ubiquitin-activating enzyme]-L-cysteine.. It functions in the pathway protein modification; protein ubiquitination. Functionally, catalyzes the first step in ubiquitin conjugation to mark cellular proteins for degradation through the ubiquitin-proteasome system. Activates ubiquitin by first adenylating its C-terminal glycine residue with ATP, and thereafter linking this residue to the side chain of a cysteine residue in E1, yielding a ubiquitin-E1 thioester and free AMP. Essential for the formation of radiation-induced foci, timely DNA repair and for response to replication stress. Promotes the recruitment of TP53BP1 and BRCA1 at DNA damage sites. This Mus musculus (Mouse) protein is Ubiquitin-like modifier-activating enzyme 1 (Uba1).